We begin with the raw amino-acid sequence, 326 residues long: Flap endonuclease 1 (326 aa).

Residues 1–100 (MGNAALRQLA…EEVQERRVAR (100 aa)) are N-domain. 7 residues coordinate Mg(2+): Asp-28, Asp-82, Glu-154, Glu-156, Asp-175, Asp-177, and Asp-225. The segment at 118–246 (AASRLEARTQ…TAISAINDHG (129 aa)) is I-domain. The tract at residues 318-326 (VQTGLDEWI) is interaction with PCNA.

This sequence belongs to the XPG/RAD2 endonuclease family. FEN1 subfamily. As to quaternary structure, interacts with PCNA. PCNA stimulates the nuclease activity without altering cleavage specificity. The cofactor is Mg(2+).

Its function is as follows. Structure-specific nuclease with 5'-flap endonuclease and 5'-3' exonuclease activities involved in DNA replication and repair. During DNA replication, cleaves the 5'-overhanging flap structure that is generated by displacement synthesis when DNA polymerase encounters the 5'-end of a downstream Okazaki fragment. Binds the unpaired 3'-DNA end and kinks the DNA to facilitate 5' cleavage specificity. Cleaves one nucleotide into the double-stranded DNA from the junction in flap DNA, leaving a nick for ligation. Also involved in the base excision repair (BER) pathway. Acts as a genome stabilization factor that prevents flaps from equilibrating into structures that lead to duplications and deletions. Also possesses 5'-3' exonuclease activity on nicked or gapped double-stranded DNA. In Haloquadratum walsbyi (strain DSM 16790 / HBSQ001), this protein is Flap endonuclease 1.